Here is a 75-residue protein sequence, read N- to C-terminus: UPF0352 protein YejL (75 aa).

The protein belongs to the UPF0352 family.

In Escherichia coli O127:H6 (strain E2348/69 / EPEC), this protein is UPF0352 protein YejL.